The primary structure comprises 119 residues: Large ribosomal subunit protein bL20 (119 aa).

It belongs to the bacterial ribosomal protein bL20 family.

Binds directly to 23S ribosomal RNA and is necessary for the in vitro assembly process of the 50S ribosomal subunit. It is not involved in the protein synthesizing functions of that subunit. The polypeptide is Large ribosomal subunit protein bL20 (rplT) (Geobacillus stearothermophilus (Bacillus stearothermophilus)).